An 810-amino-acid polypeptide reads, in one-letter code: Lon protease (810 aa).

Residues 8–201 (LPLLPLRGIL…KLCGIVAKEL (194 aa)) form the Lon N-terminal domain. 353–360 (GPPGVGKT) contacts ATP. The 182-residue stretch at 589–770 (NDEVGTVTGM…DQVLAIALLE (182 aa)) folds into the Lon proteolytic domain. Catalysis depends on residues Ser-676 and Lys-719.

This sequence belongs to the peptidase S16 family. Homohexamer. Organized in a ring with a central cavity.

The protein localises to the cytoplasm. It catalyses the reaction Hydrolysis of proteins in presence of ATP.. In terms of biological role, ATP-dependent serine protease that mediates the selective degradation of mutant and abnormal proteins as well as certain short-lived regulatory proteins. Required for cellular homeostasis and for survival from DNA damage and developmental changes induced by stress. Degrades polypeptides processively to yield small peptide fragments that are 5 to 10 amino acids long. Binds to DNA in a double-stranded, site-specific manner. In Desulforamulus reducens (strain ATCC BAA-1160 / DSM 100696 / MI-1) (Desulfotomaculum reducens), this protein is Lon protease.